A 57-amino-acid chain; its full sequence is UPF0391 membrane protein Arad_3976 (57 aa).

2 helical membrane-spanning segments follow: residues 4–24 (WAIIFFVISLIAGFFGFSGVS) and 33–53 (VLFAIFLIVFLVFLILAVMAG).

The protein belongs to the UPF0391 family.

It is found in the cell membrane. The sequence is that of UPF0391 membrane protein Arad_3976 from Rhizobium rhizogenes (strain K84 / ATCC BAA-868) (Agrobacterium radiobacter).